A 114-amino-acid chain; its full sequence is Biofilm growth-associated repressor (114 aa).

The HTH arsR-type domain maps to 17-111 (DMEKRANEVA…ALYTIFCAQE (95 aa)). The H-T-H motif DNA-binding region spans 51–74 (VGELEQQIGIGQPTLSQQLGVLRE).

Its function is as follows. Represses an operon that comprises itself, XF_0764, XF_0765, XF_0766 and blh. Binds to a palindromic AT-rich sequence spanning the -10 region of the blh promoter and blocks transcription of the operon. The chain is Biofilm growth-associated repressor (bigR) from Xylella fastidiosa (strain 9a5c).